Here is a 518-residue protein sequence, read N- to C-terminus: Retinal dehydrogenase 2 (518 aa).

Residues 184-186, 210-213, and 264-266 each bind NAD(+); these read IPW, KPAE, and STE. The active-site Proton acceptor is glutamate 286. Residue cysteine 320 is the Nucleophile of the active site. NAD(+)-binding positions include 366 to 370 and glutamate 417; that span reads KQYNK.

The protein belongs to the aldehyde dehydrogenase family. As to quaternary structure, homotetramer.

Its subcellular location is the cytoplasm. The catalysed reaction is retinal + NAD(+) + H2O = retinoate + NADH + 2 H(+). The enzyme catalyses all-trans-retinal + NAD(+) + H2O = all-trans-retinoate + NADH + 2 H(+). It carries out the reaction all-trans-13,14-dihydroretinal + NAD(+) + H2O = all-trans-13,14-dihydroretinoate + NADH + 2 H(+). It functions in the pathway cofactor metabolism; retinol metabolism. Its function is as follows. Catalyzes the NAD-dependent oxidation of aldehyde substrates, such as all-trans-retinal and all-trans-13,14-dihydroretinal, to their corresponding carboxylic acids, all-trans-retinoate and all-trans-13,14-dihydroretinoate, respectively. Retinoate signaling is critical for the transcriptional control of many genes, for instance it is crucial for initiation of meiosis in both male and female. Recognizes retinal as substrate, both in its free form and when bound to cellular retinol-binding protein. Lacks activity with benzaldehyde, acetaldehyde and octanal. Displays complete lack of activity with citral. The chain is Retinal dehydrogenase 2 (ALDH1A2) from Gallus gallus (Chicken).